Reading from the N-terminus, the 1489-residue chain is FERM domain-containing protein C (1489 aa).

Composition is skewed to polar residues over residues 59 to 79 (DTES…NFNS) and 103 to 118 (NSPL…STSI). Disordered stretches follow at residues 59–86 (DTES…HQHL), 103–197 (NSPL…PSTL), 252–271 (NSVQ…NNNN), and 277–312 (EQQQ…TPDS). Low complexity predominate over residues 131-153 (SSSSSSSDGDSNSSSDSSDNSSE). The span at 163 to 172 (HLHLHRHHRK) shows a compositional bias: basic residues. The segment covering 181-195 (FESSSESSEQYGSPS) has biased composition (low complexity). Positions 202-289 (ALKLEKIMQI…QEKQQQQQQH (88 aa)) form a coiled coil. The span at 277-287 (EQQQEKQQQQQ) shows a compositional bias: low complexity. The span at 303–312 (RSVSISTPDS) shows a compositional bias: polar residues. Residues 356 to 383 (IKVSKVLEEEMQLQQEFEKQEQLRHSAR) are a coiled coil. 3 disordered regions span residues 396–435 (NLQD…ENQN), 459–479 (VITP…KILT), and 508–569 (EDPL…TTTT). Low complexity predominate over residues 421–435 (ENVSNDNSSDNENQN). A compositionally biased stretch (polar residues) spans 545 to 555 (TASSSSSPTLQ). Residues 556–569 (ATKTTTTTTTTTTT) show a composition bias toward low complexity. Residues 637–934 (ILVHISLVDQ…GYKYFIQHDE (298 aa)) form the FERM domain. LRR repeat units follow at residues 1017-1040 (KVEL…LKDT), 1053-1075 (ENLN…AFEP), 1087-1110 (HLNL…IEKY), 1111-1133 (PNIE…VILR), 1167-1191 (NKTI…IFEG), 1196-1219 (SLSL…KFIK), 1254-1278 (SCHI…VIKG), 1282-1306 (NQTI…LCQS), 1339-1362 (NKTI…AIGT), 1367-1391 (NETL…ILNG), 1395-1418 (NSTI…SLAN), 1428-1450 (VITL…QLST), and 1451-1474 (NIPI…IKNA).

The polypeptide is FERM domain-containing protein C (frmC) (Dictyostelium discoideum (Social amoeba)).